Here is a 143-residue protein sequence, read N- to C-terminus: Nucleoside diphosphate kinase (143 aa).

6 residues coordinate ATP: K11, F59, R87, T93, R104, and N114. H117 serves as the catalytic Pros-phosphohistidine intermediate.

It belongs to the NDK family. In terms of assembly, homotetramer. Mg(2+) serves as cofactor.

The protein resides in the cytoplasm. It carries out the reaction a 2'-deoxyribonucleoside 5'-diphosphate + ATP = a 2'-deoxyribonucleoside 5'-triphosphate + ADP. The enzyme catalyses a ribonucleoside 5'-diphosphate + ATP = a ribonucleoside 5'-triphosphate + ADP. Major role in the synthesis of nucleoside triphosphates other than ATP. The ATP gamma phosphate is transferred to the NDP beta phosphate via a ping-pong mechanism, using a phosphorylated active-site intermediate. The protein is Nucleoside diphosphate kinase of Enterobacter sp. (strain 638).